We begin with the raw amino-acid sequence, 585 residues long: Amyloid protein-binding protein 2 (585 aa).

TPR repeat units follow at residues 50 to 83 (QGRLCQLGSEFCELEVFAKVLRALDKRHLLHHCF), 120 to 153 (IQVGFVLGGFLSDAGWYSDAEKVFLSCLQLCTLH), 206 to 239 (AALYGELCALLFAKSHYDEAYKWCVEAMKEITSG), 288 to 321 (SDTLLDYGFYLLNVDNICQSVAIYQAALDIRQSV), 333 to 367 (HEDLAYSSYVHQYSSGKFDNALFHAERAIGIITHI), 429 to 462 (AKHYGNLGRLYQSMRKFKEAEEMHIKAIQIKEQL), 471 to 505 (ALSVGHLASLYNYDMNQYENAEKLYLRSIAIGKKL), and 514 to 547 (EYDYRGLIKLYNSTGNYEKVFEYHNVLSNWNRLR).

Component of a CRL2 E3 ubiquitin-protein ligase complex, also named ECS (Elongin BC-CUL2/5-SOCS-box protein) complex, composed of CUL2, Elongin BC (ELOB and ELOC), RBX1 and substrate-specific adapter APPBP2. Interacts with APP; APP interaction inhibits the E3 ubiquitin-protein ligase activity of the CRL2(APPBP2) complex. In terms of processing, rapidly degraded by the proteasome upon overexpression of a C-terminal fragment of APP.

Its subcellular location is the nucleus. It localises to the cytoplasm. The protein localises to the cytoskeleton. It is found in the membrane. It participates in protein modification; protein ubiquitination. Its activity is regulated as follows. E3 ubiquitin-protein ligase activity of the CRL2(APPBP2) complex is inhibited by APP. Its function is as follows. Substrate-recognition component of a Cul2-RING (CRL2) E3 ubiquitin-protein ligase complex of the DesCEND (destruction via C-end degrons) pathway, which recognizes a C-degron located at the extreme C terminus of target proteins, leading to their ubiquitination and degradation. The C-degron recognized by the DesCEND pathway is usually a motif of less than ten residues and can be present in full-length proteins, truncated proteins or proteolytically cleaved forms. The CRL2(APPBP2) complex specifically recognizes proteins with a -Arg-Xaa-Xaa-Gly degron at the C-terminus, leading to their ubiquitination and degradation. The CRL2(APPBP2) complex mediates ubiquitination and degradation of truncated SELENOV selenoproteins produced by failed UGA/Sec decoding, which end with a -Arg-Xaa-Xaa-Gly degron. May play a role in intracellular protein transport: may be involved in the translocation of APP along microtubules toward the cell surface. In Rattus norvegicus (Rat), this protein is Amyloid protein-binding protein 2.